The primary structure comprises 337 residues: DNA-directed RNA polymerase subunit alpha (337 aa).

The tract at residues 1–233 (MIQKNWQELI…DQLALFINFK (233 aa)) is alpha N-terminal domain (alpha-NTD). Residues 249 to 337 (FNPALLKKVD…DLAKRYEDQY (89 aa)) are alpha C-terminal domain (alpha-CTD).

This sequence belongs to the RNA polymerase alpha chain family. In terms of assembly, homodimer. The RNAP catalytic core consists of 2 alpha, 1 beta, 1 beta' and 1 omega subunit. When a sigma factor is associated with the core the holoenzyme is formed, which can initiate transcription.

The catalysed reaction is RNA(n) + a ribonucleoside 5'-triphosphate = RNA(n+1) + diphosphate. Functionally, DNA-dependent RNA polymerase catalyzes the transcription of DNA into RNA using the four ribonucleoside triphosphates as substrates. This chain is DNA-directed RNA polymerase subunit alpha, found in Bartonella henselae (strain ATCC 49882 / DSM 28221 / CCUG 30454 / Houston 1) (Rochalimaea henselae).